The sequence spans 156 residues: Small ribosomal subunit protein uS7 (156 aa).

It belongs to the universal ribosomal protein uS7 family. As to quaternary structure, part of the 30S ribosomal subunit. Contacts proteins S9 and S11.

Its function is as follows. One of the primary rRNA binding proteins, it binds directly to 16S rRNA where it nucleates assembly of the head domain of the 30S subunit. Is located at the subunit interface close to the decoding center, probably blocks exit of the E-site tRNA. The sequence is that of Small ribosomal subunit protein uS7 from Streptococcus thermophilus (strain CNRZ 1066).